A 381-amino-acid polypeptide reads, in one-letter code: Alkanesulfonate monooxygenase (381 aa).

This sequence belongs to the SsuD family. In terms of assembly, homotetramer.

The enzyme catalyses an alkanesulfonate + FMNH2 + O2 = an aldehyde + FMN + sulfite + H2O + 2 H(+). In terms of biological role, catalyzes the desulfonation of aliphatic sulfonates. This chain is Alkanesulfonate monooxygenase, found in Escherichia coli O127:H6 (strain E2348/69 / EPEC).